Consider the following 40-residue polypeptide: Photosystem II reaction center protein J (40 aa).

Residues 8–28 (IPLWLIGTVVGTPVISLVGIF) form a helical membrane-spanning segment.

This sequence belongs to the PsbJ family. In terms of assembly, PSII is composed of 1 copy each of membrane proteins PsbA, PsbB, PsbC, PsbD, PsbE, PsbF, PsbH, PsbI, PsbJ, PsbK, PsbL, PsbM, PsbT, PsbX, PsbY, PsbZ, Psb30/Ycf12, at least 3 peripheral proteins of the oxygen-evolving complex and a large number of cofactors. It forms dimeric complexes.

It localises to the plastid. Its subcellular location is the chloroplast thylakoid membrane. Its function is as follows. One of the components of the core complex of photosystem II (PSII). PSII is a light-driven water:plastoquinone oxidoreductase that uses light energy to abstract electrons from H(2)O, generating O(2) and a proton gradient subsequently used for ATP formation. It consists of a core antenna complex that captures photons, and an electron transfer chain that converts photonic excitation into a charge separation. The protein is Photosystem II reaction center protein J of Huperzia lucidula (Shining clubmoss).